Reading from the N-terminus, the 82-residue chain is Sec-independent protein translocase protein TatA (82 aa).

The chain crosses the membrane as a helical span at residues 1–21 (MGSFSIWHWLIVLLIVVMVFG). Residues 46 to 82 (GASTDDSATTSAPAGQVTNNSAAADKTTIDVEAKHKS) form a disordered region. Residues 49–67 (TDDSATTSAPAGQVTNNSA) are compositionally biased toward polar residues. Residues 72–82 (TTIDVEAKHKS) show a composition bias toward basic and acidic residues.

This sequence belongs to the TatA/E family. The Tat system comprises two distinct complexes: a TatABC complex, containing multiple copies of TatA, TatB and TatC subunits, and a separate TatA complex, containing only TatA subunits. Substrates initially bind to the TatABC complex, which probably triggers association of the separate TatA complex to form the active translocon.

Its subcellular location is the cell inner membrane. Its function is as follows. Part of the twin-arginine translocation (Tat) system that transports large folded proteins containing a characteristic twin-arginine motif in their signal peptide across membranes. TatA could form the protein-conducting channel of the Tat system. The polypeptide is Sec-independent protein translocase protein TatA (Acidovorax ebreus (strain TPSY) (Diaphorobacter sp. (strain TPSY))).